Consider the following 325-residue polypeptide: Intelectin (325 aa).

Residues 1–23 (MKYCVLLIMIHLLLVELPQFPEA) form the signal peptide. The Fibrinogen C-terminal domain occupies 44–266 (IRSSYIGRSC…AAMAICSGVK (223 aa)). Cysteines 53 and 82 form a disulfide. Residues H98, E99, N101, G104, G109, D110, D145, E274, E286, and D294 each contribute to the Ca(2+) site. Disulfide bonds link C106-C292 and C262-C277. Residues 274–275 (EH) and E286 contribute to the a carbohydrate site.

As to expression, expressed at high levels in caudal kidney, liver, and swim bladder. Also expressed in gill, spleen, intestine and head kidney. Not detected in heart.

Functionally, may be involved in innate immune surveillance. May specifically recognize carbohydrate chains of pathogens and bacterial components in a calcium-dependent manner. In vitro binds N-acetylglucosamine residues. This is Intelectin from Oncorhynchus mykiss (Rainbow trout).